Here is a 127-residue protein sequence, read N- to C-terminus: Fumarate reductase subunit C (127 aa).

A run of 3 helical transmembrane segments spans residues 30–50, 67–87, and 107–127; these read ATVLPLILFTLFLTVGLGSLV, VVIAINIVALLGSLLHAHTFF, and IIVLAQWAAVAFISLIVLIVV.

This sequence belongs to the FrdC family. In terms of assembly, part of an enzyme complex containing four subunits: a flavoprotein (FrdA), an iron-sulfur protein (FrdB), and two hydrophobic anchor proteins (FrdC and FrdD).

It localises to the cell inner membrane. Anchors the catalytic components of the fumarate reductase complex to the cell membrane, binds quinones. The protein is Fumarate reductase subunit C of Vibrio vulnificus (strain CMCP6).